The following is a 250-amino-acid chain: Small ribosomal subunit protein uS3 (250 aa).

The KH type-2 domain occupies 39-111; that stretch reads IRQLINNFSK…DINLNILEVK (73 aa).

Belongs to the universal ribosomal protein uS3 family. As to quaternary structure, part of the 30S ribosomal subunit. Forms a tight complex with proteins S10 and S14.

Binds the lower part of the 30S subunit head. Binds mRNA in the 70S ribosome, positioning it for translation. This chain is Small ribosomal subunit protein uS3, found in Phytoplasma australiense.